The following is a 364-amino-acid chain: tRNA/tmRNA (uracil-C(5))-methyltransferase (364 aa).

Positions 189, 216, 221, 237, and 297 each coordinate S-adenosyl-L-methionine. Cysteine 322 serves as the catalytic Nucleophile. The Proton acceptor role is filled by glutamate 356.

It belongs to the class I-like SAM-binding methyltransferase superfamily. RNA M5U methyltransferase family. TrmA subfamily.

The enzyme catalyses uridine(54) in tRNA + S-adenosyl-L-methionine = 5-methyluridine(54) in tRNA + S-adenosyl-L-homocysteine + H(+). It carries out the reaction uridine(341) in tmRNA + S-adenosyl-L-methionine = 5-methyluridine(341) in tmRNA + S-adenosyl-L-homocysteine + H(+). Its function is as follows. Dual-specificity methyltransferase that catalyzes the formation of 5-methyluridine at position 54 (m5U54) in all tRNAs, and that of position 341 (m5U341) in tmRNA (transfer-mRNA). This Campylobacter curvus (strain 525.92) protein is tRNA/tmRNA (uracil-C(5))-methyltransferase.